A 421-amino-acid chain; its full sequence is Cyclin-A1 (421 aa).

A disordered region spans residues 1–20 (MRRHSSKSGVALPPVGQGPD).

The protein belongs to the cyclin family. Cyclin AB subfamily. Interacts with the CDK2 and the CDC2 protein kinases to form a serine/threonine kinase holoenzyme complex. The cyclin subunit imparts substrate specificity to the complex. Does not bind CDK4 and CDK5 (in vitro). The cyclin A1-CDK2 complex interacts with transcription factor E2F-1 and RB proteins. Found in a complex with CDK2, CABLES1 and CCNE1. Interacts with INCA1 and KLHDC9. In terms of processing, polyubiquitinated via 'Lys-11'-linked ubiquitin by the anaphase-promoting complex (APC/C), leading to its degradation by the proteasome. Deubiquitinated and stabilized by USP37 enables entry into S phase. Ubiquitinated during the G1 phase by the SCF(FBXO31) complex, leading to its proteasomal degradation.

It localises to the nucleus. May be involved in the control of the cell cycle at the G1/S (start) and G2/M (mitosis) transitions. May primarily function in the control of the germline meiotic cell cycle and additionally in the control of mitotic cell cycle in some somatic cells. The sequence is that of Cyclin-A1 (Ccna1) from Rattus norvegicus (Rat).